Reading from the N-terminus, the 292-residue chain is GTP cyclohydrolase FolE2 (292 aa).

Belongs to the GTP cyclohydrolase IV family.

It carries out the reaction GTP + H2O = 7,8-dihydroneopterin 3'-triphosphate + formate + H(+). Its pathway is cofactor biosynthesis; 7,8-dihydroneopterin triphosphate biosynthesis; 7,8-dihydroneopterin triphosphate from GTP: step 1/1. Functionally, converts GTP to 7,8-dihydroneopterin triphosphate. This chain is GTP cyclohydrolase FolE2, found in Staphylococcus carnosus (strain TM300).